Here is a 130-residue protein sequence, read N- to C-terminus: T-cell receptor beta chain V region A20.2.25 (130 aa).

Residues 1-21 (MSCRLLLYVSLCLVETALMNT) form the signal peptide. Residues 22–112 (KITQSPRYLI…DSAVYFCASS (91 aa)) are v segment. 2 N-linked (GlcNAc...) asparagine glycosylation sites follow: asparagine 36 and asparagine 75. Residues 113–115 (HGE) are d segment. The interval 116 to 130 (NTEVFFGKGTTLTVV) is j segment.

The sequence is that of T-cell receptor beta chain V region A20.2.25 from Mus musculus (Mouse).